Reading from the N-terminus, the 223-residue chain is Family of serine hydrolases 2 (223 aa).

Active-site charge relay system residues include Ser-110, Asp-174, and His-203.

It belongs to the AB hydrolase 3 family.

The protein localises to the cytoplasm. In terms of biological role, serine hydrolase of unknown specificity. The chain is Family of serine hydrolases 2 (FSH2) from Saccharomyces cerevisiae (strain ATCC 204508 / S288c) (Baker's yeast).